Consider the following 355-residue polypeptide: (3aS,4S,5R,7aS)-5-hydroxy-7a-methyl-1-oxo-octahydro-1H-indene-4-carboxyl-CoA dehydrogenase (355 aa).

FMN is bound by residues 21–23 (GMG), 173–175 (AGG), and 196–197 (GT).

It belongs to the nitronate monooxygenase family.

It catalyses the reaction (3aS,4S,5R,7aS)-5-hydroxy-7a-methyl-1-oxo-octahydro-1H-indene-4-carboxyl-CoA + NAD(+) = (5R,7aS)-5-hydroxy-7a-methyl-1-oxo-2,3,5,6,7,7a-hexahydro-1H-indene-carboxyl-CoA + NADH + H(+). Its pathway is steroid metabolism; cholesterol degradation. With respect to regulation, requires the presence of IpdF. Functionally, involved in the final steps of cholesterol and steroid degradation. Probably catalyzes the introduction of a double bound into the C ring of 5OH-HIC-CoA, leading to the formation of (5R,7aS)-5-hydroxy-7a-methyl-1-oxo-3,5,6,7-tetrahydro-2H-indene-4-carboxyl-CoA. This Mycobacterium tuberculosis (strain ATCC 25618 / H37Rv) protein is (3aS,4S,5R,7aS)-5-hydroxy-7a-methyl-1-oxo-octahydro-1H-indene-4-carboxyl-CoA dehydrogenase.